The chain runs to 61 residues: Large ribosomal subunit protein uL29 (61 aa).

This sequence belongs to the universal ribosomal protein uL29 family.

This Campylobacter jejuni subsp. jejuni serotype O:6 (strain 81116 / NCTC 11828) protein is Large ribosomal subunit protein uL29.